We begin with the raw amino-acid sequence, 296 residues long: Ribosomal RNA small subunit methyltransferase H (296 aa).

S-adenosyl-L-methionine-binding positions include 38-40 (GVH), Glu57, Phe88, Asp103, and His110.

The protein belongs to the methyltransferase superfamily. RsmH family.

It is found in the cytoplasm. The catalysed reaction is cytidine(1402) in 16S rRNA + S-adenosyl-L-methionine = N(4)-methylcytidine(1402) in 16S rRNA + S-adenosyl-L-homocysteine + H(+). Functionally, specifically methylates the N4 position of cytidine in position 1402 (C1402) of 16S rRNA. The sequence is that of Ribosomal RNA small subunit methyltransferase H from Borreliella burgdorferi (strain ZS7) (Borrelia burgdorferi).